We begin with the raw amino-acid sequence, 380 residues long: 3-isopropylmalate dehydratase large subunit (380 aa).

[4Fe-4S] cluster is bound by residues C262, C320, and C323.

Belongs to the aconitase/IPM isomerase family. LeuC type 2 subfamily. As to quaternary structure, heterodimer of LeuC and LeuD. [4Fe-4S] cluster serves as cofactor.

It catalyses the reaction (2R,3S)-3-isopropylmalate = (2S)-2-isopropylmalate. It participates in amino-acid biosynthesis; L-leucine biosynthesis; L-leucine from 3-methyl-2-oxobutanoate: step 2/4. Catalyzes the isomerization between 2-isopropylmalate and 3-isopropylmalate, via the formation of 2-isopropylmaleate. The polypeptide is 3-isopropylmalate dehydratase large subunit (Pyrococcus horikoshii (strain ATCC 700860 / DSM 12428 / JCM 9974 / NBRC 100139 / OT-3)).